Reading from the N-terminus, the 216-residue chain is Thiamine-phosphate synthase (216 aa).

Residues 37-41 (QVRSK) and Asp-68 contribute to the 4-amino-2-methyl-5-(diphosphooxymethyl)pyrimidine site. 2 residues coordinate Mg(2+): Asp-69 and Asp-93. Position 112 (Thr-112) interacts with 4-amino-2-methyl-5-(diphosphooxymethyl)pyrimidine. 140–142 (TPT) is a binding site for 2-[(2R,5Z)-2-carboxy-4-methylthiazol-5(2H)-ylidene]ethyl phosphate. Lys-143 is a binding site for 4-amino-2-methyl-5-(diphosphooxymethyl)pyrimidine.

Belongs to the thiamine-phosphate synthase family. Requires Mg(2+) as cofactor.

It carries out the reaction 2-[(2R,5Z)-2-carboxy-4-methylthiazol-5(2H)-ylidene]ethyl phosphate + 4-amino-2-methyl-5-(diphosphooxymethyl)pyrimidine + 2 H(+) = thiamine phosphate + CO2 + diphosphate. The enzyme catalyses 2-(2-carboxy-4-methylthiazol-5-yl)ethyl phosphate + 4-amino-2-methyl-5-(diphosphooxymethyl)pyrimidine + 2 H(+) = thiamine phosphate + CO2 + diphosphate. It catalyses the reaction 4-methyl-5-(2-phosphooxyethyl)-thiazole + 4-amino-2-methyl-5-(diphosphooxymethyl)pyrimidine + H(+) = thiamine phosphate + diphosphate. It participates in cofactor biosynthesis; thiamine diphosphate biosynthesis; thiamine phosphate from 4-amino-2-methyl-5-diphosphomethylpyrimidine and 4-methyl-5-(2-phosphoethyl)-thiazole: step 1/1. In terms of biological role, condenses 4-methyl-5-(beta-hydroxyethyl)thiazole monophosphate (THZ-P) and 2-methyl-4-amino-5-hydroxymethyl pyrimidine pyrophosphate (HMP-PP) to form thiamine monophosphate (TMP). The protein is Thiamine-phosphate synthase of Corynebacterium efficiens (strain DSM 44549 / YS-314 / AJ 12310 / JCM 11189 / NBRC 100395).